A 151-amino-acid polypeptide reads, in one-letter code: Methylglyoxal synthase (151 aa).

One can recognise an MGS-like domain in the interval 6–151 (RTMPAHKHVA…DYEAYLAERM (146 aa)). Substrate-binding positions include H19, K23, 45–48 (TGTT), and 65–66 (SG). The active-site Proton donor/acceptor is the D71. H98 lines the substrate pocket.

This sequence belongs to the methylglyoxal synthase family.

It carries out the reaction dihydroxyacetone phosphate = methylglyoxal + phosphate. Functionally, catalyzes the formation of methylglyoxal from dihydroxyacetone phosphate. This is Methylglyoxal synthase from Vibrio parahaemolyticus serotype O3:K6 (strain RIMD 2210633).